The chain runs to 71 residues: U-scoloptoxin(21)-Sm1a (71 aa).

The signal sequence occupies residues 1-21; sequence MKSVIFALFLVYLLIVRAAEA. The disordered stretch occupies residues 45–71; that stretch reads IELANDPNGPGRRRRAPAENEDFLKHS. Over residues 60–71 the composition is skewed to basic and acidic residues; sequence APAENEDFLKHS.

This sequence belongs to the scoloptoxin-21 family. Expressed by the venom gland.

The protein localises to the secreted. The chain is U-scoloptoxin(21)-Sm1a from Scolopendra morsitans (Tanzanian blue ringleg centipede).